The sequence spans 629 residues: MLLPSIPSCSFSFVVFVSVLLQTCFSFQLTPLSPKNYPPGASIDTTVNTISPFIGDGRGSDIFNYEYYDERFHFCRPENIAKQSESLGSVLFGDRLYNSPIEIKMLENQDCVPLCASIIPSSDVSFIRDLISKNYVVNWNIDNLPVATYLEGTNSKNYSLSPGFPLGKNTEKGVILFNHYDIVIEYHTTSSDQHRVVGAYVKPVSKESTLVDGNPVCSSSSNPQYLPEGADLTLVTSYSVSWKYSDTPWATRWDKYMHIESRQIRWIFIIHSAIIDTFLIFVVSIILYRTLNRDINKYNSAFVDQEDVQEDFGWKLVHGDVFRPPRRPMLFSILLGTGAQLLFMSSGIVLFAIFGIVAPSRRGSLATATVALFIISGFVSGYVSALSYKLMQGMLRKRNLLLTPFVVPGFMLAAALFFNMVFWSKSSSSTVPFSSWLLLIFLYLLFTVPLSFVGSLIGFRSREFVPPVRTNQIPRQIPSHSIWLSSFPSAIIGGSIPFLVILIELFSILDSLWFHPLYFMFGFSFFCFGILVTTCIMVSIITVYFQLCSENYNWWWRSFITPGFCGIYVFIFSVFYWFFKISSSSLATAVLYFGYSLLISVLVFFLCGSVGFFGAFLFVNKIYASIKID.

Residues 1–26 form the signal peptide; it reads MLLPSIPSCSFSFVVFVSVLLQTCFS. Topologically, residues 27–266 are lumenal; that stretch reads FQLTPLSPKN…MHIESRQIRW (240 aa). N157 is a glycosylation site (N-linked (GlcNAc...) asparagine). A helical transmembrane segment spans residues 267–287; it reads IFIIHSAIIDTFLIFVVSIIL. Residues 288–337 are Cytoplasmic-facing; it reads YRTLNRDINKYNSAFVDQEDVQEDFGWKLVHGDVFRPPRRPMLFSILLGT. Residues 338–358 traverse the membrane as a helical segment; that stretch reads GAQLLFMSSGIVLFAIFGIVA. Over 359–364 the chain is Lumenal; that stretch reads PSRRGS. Residues 365–385 traverse the membrane as a helical segment; it reads LATATVALFIISGFVSGYVSA. The Cytoplasmic portion of the chain corresponds to 386 to 401; that stretch reads LSYKLMQGMLRKRNLL. Residues 402 to 422 traverse the membrane as a helical segment; sequence LTPFVVPGFMLAAALFFNMVF. Topologically, residues 423–436 are lumenal; sequence WSKSSSSTVPFSSW. Residues 437-457 traverse the membrane as a helical segment; that stretch reads LLLIFLYLLFTVPLSFVGSLI. The Cytoplasmic segment spans residues 458–488; sequence GFRSREFVPPVRTNQIPRQIPSHSIWLSSFP. Residues 489–509 traverse the membrane as a helical segment; sequence SAIIGGSIPFLVILIELFSIL. The Lumenal segment spans residues 510-519; that stretch reads DSLWFHPLYF. Residues 520 to 544 traverse the membrane as a helical segment; that stretch reads MFGFSFFCFGILVTTCIMVSIITVY. Over 545 to 558 the chain is Cytoplasmic; that stretch reads FQLCSENYNWWWRS. The helical transmembrane segment at 559 to 579 threads the bilayer; it reads FITPGFCGIYVFIFSVFYWFF. Residues 580–598 are Lumenal-facing; that stretch reads KISSSSLATAVLYFGYSLL. A helical transmembrane segment spans residues 599–619; that stretch reads ISVLVFFLCGSVGFFGAFLFV. The Cytoplasmic segment spans residues 620–629; the sequence is NKIYASIKID.

This sequence belongs to the nonaspanin (TM9SF) (TC 9.A.2) family.

The protein resides in the golgi apparatus membrane. It localises to the vacuole membrane. The protein is Transmembrane 9 superfamily protein C1105.08 of Schizosaccharomyces pombe (strain 972 / ATCC 24843) (Fission yeast).